The primary structure comprises 382 residues: Succinate--CoA ligase [ADP-forming] subunit beta (382 aa).

One can recognise an ATP-grasp domain in the interval 9 to 240; sequence KELFSKYGVK…PRDVSEFEMY (232 aa). ATP contacts are provided by residues Lys45, 52–54, Val94, and Glu99; that span reads GRG. Residues Asn193 and Asp207 each coordinate Mg(2+). Residues Asn260 and 317-319 contribute to the substrate site; that span reads GIT.

Belongs to the succinate/malate CoA ligase beta subunit family. As to quaternary structure, heterotetramer of two alpha and two beta subunits. Requires Mg(2+) as cofactor.

The enzyme catalyses succinate + ATP + CoA = succinyl-CoA + ADP + phosphate. It catalyses the reaction GTP + succinate + CoA = succinyl-CoA + GDP + phosphate. The protein operates within carbohydrate metabolism; tricarboxylic acid cycle; succinate from succinyl-CoA (ligase route): step 1/1. Its function is as follows. Succinyl-CoA synthetase functions in the citric acid cycle (TCA), coupling the hydrolysis of succinyl-CoA to the synthesis of either ATP or GTP and thus represents the only step of substrate-level phosphorylation in the TCA. The beta subunit provides nucleotide specificity of the enzyme and binds the substrate succinate, while the binding sites for coenzyme A and phosphate are found in the alpha subunit. The sequence is that of Succinate--CoA ligase [ADP-forming] subunit beta from Pyrobaculum arsenaticum (strain DSM 13514 / JCM 11321 / PZ6).